Consider the following 123-residue polypeptide: Small ribosomal subunit protein uS12c (123 aa).

Residues 9-31 are disordered; it reads RNKRQAAENKTKSPALQRSPQRR.

It belongs to the universal ribosomal protein uS12 family. As to quaternary structure, part of the 30S ribosomal subunit.

The protein resides in the plastid. Its subcellular location is the chloroplast. Functionally, with S4 and S5 plays an important role in translational accuracy. Located at the interface of the 30S and 50S subunits. This Spirogyra maxima (Green alga) protein is Small ribosomal subunit protein uS12c (rps12).